The sequence spans 304 residues: Small glutamine-rich tetratricopeptide repeat-containing protein beta (304 aa).

TPR repeat units follow at residues 15-49 (LREQ…SPED), 85-118 (ADQL…DPNN), 120-152 (VYYC…DSKY), and 153-186 (SKAY…DPEN). An N6-acetyllysine modification is found at Lys-131. Phosphoserine occurs at positions 293, 295, and 297.

This sequence belongs to the SGT family. Homooligomerize.

Co-chaperone that binds directly to HSC70 and HSP70 and regulates their ATPase activity. The sequence is that of Small glutamine-rich tetratricopeptide repeat-containing protein beta (Sgtb) from Mus musculus (Mouse).